The following is a 455-amino-acid chain: Chitin deacetylase 2 (455 aa).

An N-terminal signal peptide occupies residues 1–19 (MIPSTAAALLTLTAGAAFA). N-linked (GlcNAc...) asparagine glycans are attached at residues asparagine 86, asparagine 98, asparagine 122, and asparagine 142. The 191-residue stretch at 157–347 (MTWGLGFDDG…IKSAFNYIVP (191 aa)) folds into the NodB homology domain. Aspartate 164 serves as the catalytic Proton acceptor. Residue aspartate 164 coordinates acetate. Aspartate 165 lines the Co(2+) pocket. N-linked (GlcNAc...) asparagine glycosylation occurs at asparagine 168. Co(2+) contacts are provided by histidine 214 and histidine 218. Tyrosine 255 contributes to the acetate binding site. N-linked (GlcNAc...) asparagine glycans are attached at residues asparagine 270 and asparagine 308. The Proton donor role is filled by histidine 321. Residues asparagine 325, asparagine 353, asparagine 362, and asparagine 377 are each glycosylated (N-linked (GlcNAc...) asparagine). A disordered region spans residues 381 to 423 (STTQKDGSSSTNTASGSGAAGSASATSSSDDSSSSGGSSGSSG). The N-linked (GlcNAc...) asparagine glycan is linked to asparagine 426. Serine 429 carries GPI-anchor amidated serine lipidation. Positions 430–455 (GALGMFDSLSGVGLILGGVVAGVMLL) are cleaved as a propeptide — removed in mature form.

This sequence belongs to the polysaccharide deacetylase family. It depends on Co(2+) as a cofactor. Post-translationally, the GPI anchor is required for the attachment to the cell membrane but not for cell surface targeting.

The protein localises to the secreted. Its subcellular location is the cell wall. It localises to the cell membrane. The catalysed reaction is [(1-&gt;4)-N-acetyl-beta-D-glucosaminyl](n) + n H2O = chitosan + n acetate. In terms of biological role, hydrolyzes the N-acetamido groups of N-acetyl-D-glucosamine residues in chitin to form chitosan and acetate. Chitosan is required to anchor melanin to the cell wall, for maintenance of cell wall integrity, and for proper cytokinesis. Chitosan offers an advantage during infection as it is less readily detected than chitin by host immunosurveillance mechanisms. This is Chitin deacetylase 2 from Cryptococcus neoformans var. grubii serotype A (strain H99 / ATCC 208821 / CBS 10515 / FGSC 9487) (Filobasidiella neoformans var. grubii).